A 209-amino-acid chain; its full sequence is LexA repressor (209 aa).

Residues 28–48 (RAEIAKELGFRSANAAEEHLK) constitute a DNA-binding region (H-T-H motif). Catalysis depends on for autocatalytic cleavage activity residues S126 and K163.

This sequence belongs to the peptidase S24 family. As to quaternary structure, homodimer.

It catalyses the reaction Hydrolysis of Ala-|-Gly bond in repressor LexA.. Its function is as follows. Represses a number of genes involved in the response to DNA damage (SOS response), including recA and lexA. In the presence of single-stranded DNA, RecA interacts with LexA causing an autocatalytic cleavage which disrupts the DNA-binding part of LexA, leading to derepression of the SOS regulon and eventually DNA repair. The protein is LexA repressor of Vibrio cholerae serotype O1 (strain ATCC 39541 / Classical Ogawa 395 / O395).